Consider the following 183-residue polypeptide: MSVVVGGVEYSLNNWARYEIKRRAAELESVNYYPHCEYVMPEDIVVSILGSKPNCPFLEALKRFHDFLKKRRVIFKGEYLVIPWMGAQDVADMIHHVENRINLDHLEDLAHMLKLITYHRSFDTCINQSFEQLYAFKFPDANIETHELKHIRQLEKKMYGYILRLEKLQTVLTFYIEFLLKQV.

This sequence belongs to the asfivirus S183L family.

This is an uncharacterized protein from African swine fever virus (isolate Warthog/Namibia/Wart80/1980) (ASFV).